Reading from the N-terminus, the 319-residue chain is Methionyl-tRNA formyltransferase (319 aa).

113–116 (SLLP) is a binding site for (6S)-5,6,7,8-tetrahydrofolate.

The protein belongs to the Fmt family.

It carries out the reaction L-methionyl-tRNA(fMet) + (6R)-10-formyltetrahydrofolate = N-formyl-L-methionyl-tRNA(fMet) + (6S)-5,6,7,8-tetrahydrofolate + H(+). Functionally, attaches a formyl group to the free amino group of methionyl-tRNA(fMet). The formyl group appears to play a dual role in the initiator identity of N-formylmethionyl-tRNA by promoting its recognition by IF2 and preventing the misappropriation of this tRNA by the elongation apparatus. The protein is Methionyl-tRNA formyltransferase of Pseudomonas fluorescens (strain Pf0-1).